Here is a 356-residue protein sequence, read N- to C-terminus: 3-isopropylmalate dehydrogenase (356 aa).

Residues Arg95, Arg105, Arg133, and Asp223 each contribute to the substrate site. Mg(2+) is bound by residues Asp223, Asp247, and Asp251. 281 to 293 (GSAPDIAGQNKAN) provides a ligand contact to NAD(+).

Belongs to the isocitrate and isopropylmalate dehydrogenases family. LeuB type 1 subfamily. In terms of assembly, homodimer. Requires Mg(2+) as cofactor. Mn(2+) serves as cofactor.

It localises to the cytoplasm. It catalyses the reaction (2R,3S)-3-isopropylmalate + NAD(+) = 4-methyl-2-oxopentanoate + CO2 + NADH. It participates in amino-acid biosynthesis; L-leucine biosynthesis; L-leucine from 3-methyl-2-oxobutanoate: step 3/4. Functionally, catalyzes the oxidation of 3-carboxy-2-hydroxy-4-methylpentanoate (3-isopropylmalate) to 3-carboxy-4-methyl-2-oxopentanoate. The product decarboxylates to 4-methyl-2 oxopentanoate. This Neisseria meningitidis serogroup B (strain ATCC BAA-335 / MC58) protein is 3-isopropylmalate dehydrogenase.